The chain runs to 140 residues: Ribosomal RNA large subunit methyltransferase H (140 aa).

S-adenosyl-L-methionine-binding positions include Leu58, Gly90, and 108–113 (LSLLTF).

It belongs to the RNA methyltransferase RlmH family. Homodimer.

The protein localises to the cytoplasm. It carries out the reaction pseudouridine(1915) in 23S rRNA + S-adenosyl-L-methionine = N(3)-methylpseudouridine(1915) in 23S rRNA + S-adenosyl-L-homocysteine + H(+). Functionally, specifically methylates the pseudouridine at position 1915 (m3Psi1915) in 23S rRNA. This is Ribosomal RNA large subunit methyltransferase H from Protochlamydia amoebophila (strain UWE25).